The chain runs to 156 residues: Aspartate carbamoyltransferase regulatory chain (156 aa).

Zn(2+)-binding residues include Cys110, Cys115, Cys140, and Cys143.

Belongs to the PyrI family. Contains catalytic and regulatory chains. The cofactor is Zn(2+).

Involved in allosteric regulation of aspartate carbamoyltransferase. The sequence is that of Aspartate carbamoyltransferase regulatory chain from Methanocella arvoryzae (strain DSM 22066 / NBRC 105507 / MRE50).